The primary structure comprises 596 residues: Isocitrate dehydrogenase kinase/phosphatase (596 aa).

Residues 316–322 and Lys337 contribute to the ATP site; that span reads APGIRGM. Residue Asp372 is part of the active site.

Belongs to the AceK family.

Its subcellular location is the cytoplasm. The catalysed reaction is L-seryl-[isocitrate dehydrogenase] + ATP = O-phospho-L-seryl-[isocitrate dehydrogenase] + ADP + H(+). Its function is as follows. Bifunctional enzyme which can phosphorylate or dephosphorylate isocitrate dehydrogenase (IDH) on a specific serine residue. This is a regulatory mechanism which enables bacteria to bypass the Krebs cycle via the glyoxylate shunt in response to the source of carbon. When bacteria are grown on glucose, IDH is fully active and unphosphorylated, but when grown on acetate or ethanol, the activity of IDH declines drastically concomitant with its phosphorylation. The polypeptide is Isocitrate dehydrogenase kinase/phosphatase (Cronobacter sakazakii (strain ATCC BAA-894) (Enterobacter sakazakii)).